The primary structure comprises 357 residues: Arginine kinase (357 aa).

The region spanning 9–91 (KLEAGFKKLQ…FDPIIDDYHG (83 aa)) is the Phosphagen kinase N-terminal domain. Residue 64-68 (GVGIY) coordinates substrate. Residues 119-356 (FIISTRVRCG…LEMIKMEKAA (238 aa)) form the Phosphagen kinase C-terminal domain. Residues 122–126 (STRVR) and His-185 each bind ATP. Glu-225 contacts substrate. Residue Arg-229 coordinates ATP. Cys-271 provides a ligand contact to substrate. Residues 280–284 (RASVH) and 309–314 (RGTRGE) contribute to the ATP site. Position 314 (Glu-314) interacts with substrate.

It belongs to the ATP:guanido phosphotransferase family. As to quaternary structure, monomer.

The protein localises to the cytoplasm. The catalysed reaction is L-arginine + ATP = N(omega)-phospho-L-arginine + ADP + H(+). Functionally, catalyzes the reversible transfer of the terminal phosphoryl group of ATP to L-arginine. The protein is Arginine kinase of Limulus polyphemus (Atlantic horseshoe crab).